A 391-amino-acid chain; its full sequence is Alanine racemase, biosynthetic (391 aa).

The active-site Proton acceptor; specific for D-alanine is the lysine 52. Residue lysine 52 is modified to N6-(pyridoxal phosphate)lysine. Arginine 149 provides a ligand contact to substrate. The Proton acceptor; specific for L-alanine role is filled by tyrosine 271. Position 330 (methionine 330) interacts with substrate.

It belongs to the alanine racemase family. Pyridoxal 5'-phosphate is required as a cofactor.

It carries out the reaction L-alanine = D-alanine. It participates in amino-acid biosynthesis; D-alanine biosynthesis; D-alanine from L-alanine: step 1/1. It functions in the pathway cell wall biogenesis; peptidoglycan biosynthesis. Catalyzes the interconversion of L-alanine and D-alanine. Provides the D-alanine required for cell wall biosynthesis. This chain is Alanine racemase, biosynthetic (alr), found in Agrobacterium fabrum (strain C58 / ATCC 33970) (Agrobacterium tumefaciens (strain C58)).